A 135-amino-acid polypeptide reads, in one-letter code: DNA-directed RNA polymerase subunit omega (135 aa).

The disordered stretch occupies residues 107–135 (ASQESQDYEVDGEIDDEINDQDGDEEVSV). A compositionally biased stretch (acidic residues) spans 112–135 (QDYEVDGEIDDEINDQDGDEEVSV).

It belongs to the RNA polymerase subunit omega family. In terms of assembly, the RNAP catalytic core consists of 2 alpha, 1 beta, 1 beta' and 1 omega subunit. When a sigma factor is associated with the core the holoenzyme is formed, which can initiate transcription.

The catalysed reaction is RNA(n) + a ribonucleoside 5'-triphosphate = RNA(n+1) + diphosphate. Functionally, promotes RNA polymerase assembly. Latches the N- and C-terminal regions of the beta' subunit thereby facilitating its interaction with the beta and alpha subunits. This is DNA-directed RNA polymerase subunit omega from Wolbachia pipientis wMel.